A 113-amino-acid polypeptide reads, in one-letter code: Protein PucD (113 aa).

Functionally, seems to be required for the LH-II stabilization. The polypeptide is Protein PucD (pucD) (Rhodobacter capsulatus (Rhodopseudomonas capsulata)).